The chain runs to 910 residues: Staphylococcal nuclease domain-containing protein 1 (910 aa).

Ala-2 bears the N-acetylalanine mark. TNase-like domains are found at residues 18–166 (TVQR…MWSE), 193–328 (KPVN…IWRD), and 341–496 (KQFV…LHSK). Thr-103 is modified (phosphothreonine). Residue Lys-193 is modified to N6-acetyllysine. Residues Thr-235 and Thr-240 each carry the phosphothreonine modification. Short sequence motifs (nuclear localization signal) lie at residues 321 to 325 (RRLRI) and 388 to 392 (KKLRP). Position 426 is a phosphoserine (Ser-426). A Glycyl lysine isopeptide (Lys-Gly) (interchain with G-Cter in SUMO2) cross-link involves residue Lys-513. One can recognise a TNase-like 4 domain in the interval 525–660 (GRSEAVVEYV…KQRKEKVWAH (136 aa)). Lys-641 carries the N6-acetyllysine modification. Ser-645 is subject to Phosphoserine. Residues 729–787 (APRRGEFCIAKFVDGEWYRARVEKVESPAKVHVFYIDYGNREILPSTRLGTLPPAFSTR) enclose the Tudor domain. Thr-779 carries the phosphothreonine modification. Phosphoserine is present on residues Ser-785 and Ser-909.

As to quaternary structure, forms a ternary complex with STAT6 and POLR2A. Associates with the RNA-induced silencing complex (RISC). Interacts with the RISC components AGO2, FMR1 and TNRC6A. Interacts with GTF2E1 and GTF2E2. Interacts with PIM1. Interacts with STAT5. Interacts with SYT11 (via C2 2 domain); the interaction with SYT11 is direct. Post-translationally, phosphorylated by PIM1 in vitro.

Its subcellular location is the cytoplasm. It is found in the nucleus. It localises to the melanosome. The catalysed reaction is Endonucleolytic cleavage to nucleoside 3'-phosphates and 3'-phosphooligonucleotide end-products.. In terms of biological role, endonuclease that mediates miRNA decay of both protein-free and AGO2-loaded miRNAs. As part of its function in miRNA decay, regulates mRNAs involved in G1-to-S phase transition. Functions as a bridging factor between STAT6 and the basal transcription factor. Plays a role in PIM1 regulation of MYB activity. Functions as a transcriptional coactivator for STAT5. This is Staphylococcal nuclease domain-containing protein 1 (Snd1) from Mus musculus (Mouse).